A 413-amino-acid polypeptide reads, in one-letter code: 3-hydroxy-3-methylglutaryl-coenzyme A reductase (413 aa).

Active-site charge relay system residues include glutamate 106 and aspartate 312. Histidine 408 functions as the Proton donor in the catalytic mechanism.

This sequence belongs to the HMG-CoA reductase family.

The catalysed reaction is (R)-mevalonate + 2 NADP(+) + CoA = (3S)-3-hydroxy-3-methylglutaryl-CoA + 2 NADPH + 2 H(+). It functions in the pathway metabolic intermediate biosynthesis; (R)-mevalonate biosynthesis; (R)-mevalonate from acetyl-CoA: step 3/3. Its function is as follows. Converts HMG-CoA to mevalonate. This is 3-hydroxy-3-methylglutaryl-coenzyme A reductase (hmgA) from Pyrococcus horikoshii (strain ATCC 700860 / DSM 12428 / JCM 9974 / NBRC 100139 / OT-3).